A 260-amino-acid chain; its full sequence is tRNA (guanine-N(7)-)-methyltransferase (260 aa).

The interval 1 to 37 is disordered; it reads MIHDPNDAGLPDQLPTPSSEAENSPAGDTTPPEEALH. 4 residues coordinate S-adenosyl-L-methionine: Glu-90, Glu-115, Asp-142, and Asp-165. The active site involves Asp-165. Substrate contacts are provided by residues Lys-169, Asp-201, and 236–239; that span reads TKFE.

This sequence belongs to the class I-like SAM-binding methyltransferase superfamily. TrmB family.

The catalysed reaction is guanosine(46) in tRNA + S-adenosyl-L-methionine = N(7)-methylguanosine(46) in tRNA + S-adenosyl-L-homocysteine. The protein operates within tRNA modification; N(7)-methylguanine-tRNA biosynthesis. Its function is as follows. Catalyzes the formation of N(7)-methylguanine at position 46 (m7G46) in tRNA. The sequence is that of tRNA (guanine-N(7)-)-methyltransferase from Paraburkholderia xenovorans (strain LB400).